The following is a 118-amino-acid chain: DNA-binding protein YG5714_1868 (118 aa).

It belongs to the PDCD5 family.

This chain is DNA-binding protein YG5714_1868, found in Saccharolobus islandicus (strain Y.G.57.14 / Yellowstone #1) (Sulfolobus islandicus).